A 158-amino-acid chain; its full sequence is Snaclec flavocetin-A subunit alpha (158 aa).

The first 23 residues, 1 to 23 (MERLIFVSFGLLVVILSLSGTGA), serve as a signal peptide directing secretion. Cystine bridges form between Cys27–Cys38, Cys55–Cys152, and Cys127–Cys144. One can recognise a C-type lectin domain in the interval 34 to 153 (YDRYCYQAFS…CGTENPFVCK (120 aa)).

Belongs to the snaclec family. In terms of assembly, tetramer of heterodimers of alpha and beta subunits (alphabeta)(4); disulfide-linked. In terms of tissue distribution, expressed by the venom gland.

The protein localises to the secreted. Its function is as follows. Strong platelet aggregation inhibitor. Binds specifically to platelet glycoprotein Ibalpha (GP1BA) with high affinity and inhibits vWF-dependent platelet aggregation. Has also been observed to induce small agglutinates in washed platelets by binding to GPIb. The sequence is that of Snaclec flavocetin-A subunit alpha from Protobothrops flavoviridis (Habu).